A 527-amino-acid polypeptide reads, in one-letter code: Probable serine/threonine-protein kinase DDB_G0271538 (527 aa).

Basic and acidic residues predominate over residues 1 to 10; it reads MNINFSKDDI. Residues 1 to 24 are disordered; that stretch reads MNINFSKDDITGLPKSTKEEDEND. One can recognise a Protein kinase domain in the interval 33–294; it reads LFMDVEIGRG…KIVVEGLKVL (262 aa). ATP is bound by residues 39-47 and lysine 60; that span reads IGRGSFGQV. Aspartate 156 (proton acceptor) is an active-site residue. 3 disordered regions span residues 304-375, 422-452, and 485-527; these read VKGK…ISGS, FTPP…DDVP, and TALD…KKKL. The span at 313-324 shows a compositional bias: acidic residues; that stretch reads DPDEDSFIDPND. The span at 325 to 359 shows a compositional bias: low complexity; that stretch reads DSNNNNNSENNNNNNDNSNENNENNNENNNNSNEN. The span at 440-452 shows a compositional bias: acidic residues; the sequence is VDEDEDEDEDDVP. The span at 512–527 shows a compositional bias: basic residues; that stretch reads PKKKPNNKNKKKKKKL.

It belongs to the protein kinase superfamily. TKL Ser/Thr protein kinase family.

It catalyses the reaction L-seryl-[protein] + ATP = O-phospho-L-seryl-[protein] + ADP + H(+). It carries out the reaction L-threonyl-[protein] + ATP = O-phospho-L-threonyl-[protein] + ADP + H(+). The polypeptide is Probable serine/threonine-protein kinase DDB_G0271538 (Dictyostelium discoideum (Social amoeba)).